A 527-amino-acid chain; its full sequence is ARS-binding protein 2 (527 aa).

Disordered regions lie at residues 160-184 (PDVN…HSAS), 219-265 (SHHM…NSHN), and 282-344 (IDPD…IKRL). Over residues 164 to 177 (SSSISTMRTSTSPS) the composition is skewed to low complexity. The segment covering 225–239 (RGSQQAHQTTPQNHS) has biased composition (polar residues). Positions 284-303 (PDWHQWPDDLRDVSSPKESD) are enriched in basic and acidic residues. Residues Ser297, Ser298, and Ser302 each carry the phosphoserine modification. Positions 328 to 343 (PRKRGRPPGARNKIKR) are enriched in basic residues.

The protein resides in the nucleus. Binds, preferentially, to the Maundrell ARS consensus sequence within ARS3002. The protein is ARS-binding protein 2 (abp2) of Schizosaccharomyces pombe (strain 972 / ATCC 24843) (Fission yeast).